The following is a 167-amino-acid chain: Putative 4-hydroxy-4-methyl-2-oxoglutarate aldolase (167 aa).

Substrate-binding positions include 81–84 (GDII) and R103. Residue D104 participates in a divalent metal cation binding.

This sequence belongs to the class II aldolase/RraA-like family. As to quaternary structure, homotrimer. It depends on a divalent metal cation as a cofactor.

The enzyme catalyses 4-hydroxy-4-methyl-2-oxoglutarate = 2 pyruvate. It catalyses the reaction oxaloacetate + H(+) = pyruvate + CO2. Catalyzes the aldol cleavage of 4-hydroxy-4-methyl-2-oxoglutarate (HMG) into 2 molecules of pyruvate. Also contains a secondary oxaloacetate (OAA) decarboxylase activity due to the common pyruvate enolate transition state formed following C-C bond cleavage in the retro-aldol and decarboxylation reactions. The protein is Putative 4-hydroxy-4-methyl-2-oxoglutarate aldolase of Corynebacterium jeikeium (strain K411).